The primary structure comprises 711 residues: Toxin RTX-III translocation ATP-binding protein (711 aa).

Positions 1 to 129 (MESQMPFNEK…EIFQGGMILI (129 aa)) constitute a Peptidase C39 domain. H87 is a catalytic residue. Residues 158–440 (FVETIIVSIF…LAQLWQDFQQ (283 aa)) form the ABC transmembrane type-1 domain. 5 helical membrane passes run 162–182 (IIVSIFLQLFALITPLFFQVV), 195–215 (LNVITVALSVVVIFEIVLSGL), 273–293 (ALTSVLDLLFSFIFFAVMWYY), 299–319 (IVILLSLPCYIAWSIFISPIL), and 392–412 (VMIINLWLGAHLVISGDLSIG). The region spanning 472–707 (IAFKHIRFRY…ENGLYYYLNQ (236 aa)) is the ABC transporter domain. Residue 506–513 (GRSGSGKS) participates in ATP binding.

It belongs to the ABC transporter superfamily. Protein-1 exporter (TC 3.A.1.109) family. In terms of assembly, homodimer.

The protein localises to the cell membrane. In terms of biological role, involved in the transport of the toxin RTX-III. The polypeptide is Toxin RTX-III translocation ATP-binding protein (apxIIIB) (Actinobacillus pleuropneumoniae (Haemophilus pleuropneumoniae)).